The following is a 138-amino-acid chain: Nucleoside diphosphate kinase (138 aa).

The ATP site is built by lysine 11, phenylalanine 59, arginine 87, threonine 93, arginine 104, and asparagine 114. Histidine 117 serves as the catalytic Pros-phosphohistidine intermediate.

The protein belongs to the NDK family. Mg(2+) is required as a cofactor.

The protein resides in the cytoplasm. It catalyses the reaction a 2'-deoxyribonucleoside 5'-diphosphate + ATP = a 2'-deoxyribonucleoside 5'-triphosphate + ADP. The catalysed reaction is a ribonucleoside 5'-diphosphate + ATP = a ribonucleoside 5'-triphosphate + ADP. Major role in the synthesis of nucleoside triphosphates other than ATP. The ATP gamma phosphate is transferred to the NDP beta phosphate via a ping-pong mechanism, using a phosphorylated active-site intermediate. The sequence is that of Nucleoside diphosphate kinase from Saccharolobus solfataricus (strain ATCC 35092 / DSM 1617 / JCM 11322 / P2) (Sulfolobus solfataricus).